Here is a 199-residue protein sequence, read N- to C-terminus: Alpha-D-glucose 1-phosphate phosphatase YihX (199 aa).

The Nucleophile role is filled by Asp6. Asp6 provides a ligand contact to Mg(2+). Residues 6–8, 107–108, Lys141, and Asp166 each bind substrate; these read DLG and SN. Residue Asp166 participates in Mg(2+) binding.

This sequence belongs to the HAD-like hydrolase superfamily. YihX family. It depends on Mg(2+) as a cofactor. Requires Mn(2+) as cofactor. Co(2+) serves as cofactor. The cofactor is Zn(2+).

It catalyses the reaction alpha-D-glucose 1-phosphate + H2O = D-glucose + phosphate. Its function is as follows. Catalyzes the dephosphorylation of alpha-D-glucose 1-phosphate (Glc1P) and, to a lesser extent, of other sugar phosphates. Has no activity with the beta form of Glc1P. In addition, YihX has significant phosphatase activity against pyridoxal phosphate (PLP) and low beta-phosphoglucomutase activity. The chain is Alpha-D-glucose 1-phosphate phosphatase YihX (yihX) from Escherichia coli (strain K12).